The following is a 32-amino-acid chain: Protamine-2 (32 aa).

A disordered region spans residues 1–32 (PRRRRSSSRPVRRRRARRVSRRRRRRGGRRRR).

As to expression, testis.

Its subcellular location is the nucleus. The protein resides in the chromosome. Protamines substitute for histones in the chromatin of sperm during the haploid phase of spermatogenesis. They compact sperm DNA into a highly condensed, stable and inactive complex. This chain is Protamine-2, found in Oncorhynchus mykiss (Rainbow trout).